Here is a 338-residue protein sequence, read N- to C-terminus: Large ribosomal subunit protein uL3 (338 aa).

The tract at residues 230 to 253 (HRKGHRRTGTIGPQAPALMFTQPR) is disordered.

The protein belongs to the universal ribosomal protein uL3 family. Part of the 50S ribosomal subunit. Forms a cluster with proteins L14 and L24e.

Its function is as follows. One of the primary rRNA binding proteins, it binds directly near the 3'-end of the 23S rRNA, where it nucleates assembly of the 50S subunit. This is Large ribosomal subunit protein uL3 from Pyrobaculum neutrophilum (strain DSM 2338 / JCM 9278 / NBRC 100436 / V24Sta) (Thermoproteus neutrophilus).